The following is a 544-amino-acid chain: CTP synthase (544 aa).

The interval 1–265 is amidoligase domain; sequence MTKFIFVTGG…DNIITEQLQL (265 aa). CTP is bound at residue S13. A UTP-binding site is contributed by S13. ATP contacts are provided by residues 14–19 and D71; that span reads SLGKGI. 2 residues coordinate Mg(2+): D71 and E139. CTP-binding positions include 146–148, 186–191, and K222; these read DIE and KTKPTQ. Residues 186–191 and K222 each bind UTP; that span reads KTKPTQ. Positions 290–544 constitute a Glutamine amidotransferase type-1 domain; the sequence is KIAMVGKYVD…VKAALNNKKA (255 aa). Residue G353 coordinates L-glutamine. C380 functions as the Nucleophile; for glutamine hydrolysis in the catalytic mechanism. Residues 381–384, E404, and R471 contribute to the L-glutamine site; that span reads LGMQ. Active-site residues include H517 and E519.

Belongs to the CTP synthase family. In terms of assembly, homotetramer.

The catalysed reaction is UTP + L-glutamine + ATP + H2O = CTP + L-glutamate + ADP + phosphate + 2 H(+). It carries out the reaction L-glutamine + H2O = L-glutamate + NH4(+). The enzyme catalyses UTP + NH4(+) + ATP = CTP + ADP + phosphate + 2 H(+). Its pathway is pyrimidine metabolism; CTP biosynthesis via de novo pathway; CTP from UDP: step 2/2. Its activity is regulated as follows. Allosterically activated by GTP, when glutamine is the substrate; GTP has no effect on the reaction when ammonia is the substrate. The allosteric effector GTP functions by stabilizing the protein conformation that binds the tetrahedral intermediate(s) formed during glutamine hydrolysis. Inhibited by the product CTP, via allosteric rather than competitive inhibition. Catalyzes the ATP-dependent amination of UTP to CTP with either L-glutamine or ammonia as the source of nitrogen. Regulates intracellular CTP levels through interactions with the four ribonucleotide triphosphates. The polypeptide is CTP synthase (Neisseria meningitidis serogroup C / serotype 2a (strain ATCC 700532 / DSM 15464 / FAM18)).